A 130-amino-acid polypeptide reads, in one-letter code: Small ribosomal subunit protein uS8 (130 aa).

The protein belongs to the universal ribosomal protein uS8 family. In terms of assembly, part of the 30S ribosomal subunit. Contacts proteins S5 and S12.

One of the primary rRNA binding proteins, it binds directly to 16S rRNA central domain where it helps coordinate assembly of the platform of the 30S subunit. The chain is Small ribosomal subunit protein uS8 from Shewanella sediminis (strain HAW-EB3).